Reading from the N-terminus, the 744-residue chain is Spalt-like protein sem-4 (744 aa).

The segment at 6–32 (AEMAAVSSRRKQSKPRRMSGEGDAMMS) is disordered. Residues 13 to 22 (SRRKQSKPRR) show a composition bias toward basic residues. 4 C2H2-type zinc fingers span residues 99–124 (SSCP…LDAH), 305–327 (NQCI…YRTH), 333–355 (FKCK…MGVH), and 411–433 (QQCP…ITEH). Residues 487-497 (KNDSSPNTDTS) show a composition bias toward polar residues. 2 disordered regions span residues 487–530 (KNDS…RQDI) and 542–562 (KLEE…PKNE). The segment covering 499 to 509 (VEEKITRDDPP) has biased composition (basic and acidic residues). Over residues 513 to 525 (SLSPSNSSDSSSS) the composition is skewed to low complexity. Polar residues predominate over residues 551 to 561 (QQVSTTPNPKN). C2H2-type zinc fingers lie at residues 589–611 (HQCG…MRTH), 617–639 (FKCD…MGTH), and 701–723 (TVCS…LKEH). The segment at 725-744 (NNGSSAAPTPLASAATPPPS) is disordered. Positions 728–744 (SSAAPTPLASAATPPPS) are enriched in low complexity.

This sequence belongs to the sal C2H2-type zinc-finger protein family.

It localises to the nucleus. Functionally, transcription factor, involved in positive and negative modulation of transcription. Binds to multiple DNA sequence motifs in the regulatory elements of target genes, including homeobox selector egl-5 and LIM homeobox mec-3. Involved in cell-fate regulation in multiple lineages, including neuronal, mesodermal and vulval. Required to regulate the fate of PLM touch receptor neurons, acting via negative modulation of transcription of egl-5 and mec-3. May modulate gene expression by interacting with different transcription factors during neuronal and mesodermal cell development. Promotes the proliferative sex myoblast (SM) fate, in a cell autonomous manner, acting via the SoxC transcription factor sem-2. Involved in vulval cell-fate determination, acting by regulating expression of homeobox protein lin-39, and may link lin-39 to incoming signaling pathways. Plays a role in detoxification of reactive oxygen species (ROS), by regulating expression of transcription factor skn-1 and the phase II detoxification genes. The chain is Spalt-like protein sem-4 from Caenorhabditis elegans.